We begin with the raw amino-acid sequence, 249 residues long: Triosephosphate isomerase (249 aa).

Substrate contacts are provided by asparagine 12 and lysine 14. Residue lysine 14 is modified to N6-acetyllysine. Position 68 is a 3'-nitrotyrosine (tyrosine 68). Serine 80 and serine 106 each carry phosphoserine. Residue lysine 142 forms a Glycyl lysine isopeptide (Lys-Gly) (interchain with G-Cter in SUMO1) linkage. At lysine 149 the chain carries N6-succinyllysine. Lysine 156 carries the N6-acetyllysine; alternate modification. Lysine 156 carries the N6-succinyllysine; alternate modification. Serine 159 is modified (phosphoserine). Residue glutamate 166 is the Proton acceptor of the active site. Phosphothreonine is present on threonine 173. Lysine 194 is subject to N6-acetyllysine; alternate. Residue lysine 194 is modified to N6-succinyllysine; alternate. The residue at position 194 (lysine 194) is an N6-methyllysine; alternate. Position 198 is a phosphoserine (serine 198). 3'-nitrotyrosine is present on tyrosine 209. Serine 212 carries the phosphoserine modification. A Phosphothreonine modification is found at threonine 214. Serine 223 is modified (phosphoserine). Position 238 is an N6-acetyllysine (lysine 238).

The protein belongs to the triosephosphate isomerase family. In terms of assembly, homodimer.

Its subcellular location is the cytoplasm. The catalysed reaction is D-glyceraldehyde 3-phosphate = dihydroxyacetone phosphate. The enzyme catalyses dihydroxyacetone phosphate = methylglyoxal + phosphate. Its pathway is carbohydrate biosynthesis; gluconeogenesis. The protein operates within carbohydrate degradation; glycolysis; D-glyceraldehyde 3-phosphate from glycerone phosphate: step 1/1. In terms of biological role, triosephosphate isomerase is an extremely efficient metabolic enzyme that catalyzes the interconversion between dihydroxyacetone phosphate (DHAP) and D-glyceraldehyde-3-phosphate (G3P) in glycolysis and gluconeogenesis. Functionally, it is also responsible for the non-negligible production of methylglyoxal a reactive cytotoxic side-product that modifies and can alter proteins, DNA and lipids. The chain is Triosephosphate isomerase from Mesocricetus auratus (Golden hamster).